We begin with the raw amino-acid sequence, 898 residues long: Chitin synthase 1 (898 aa).

The interval Met1–Arg154 is disordered. The span at Pro9–Pro21 shows a compositional bias: pro residues. Polar residues-rich tracts occupy residues Asp64–Asp75 and Asp136–Pro146. The next 5 membrane-spanning stretches (helical) occupy residues Ser441 to Leu461, Arg540 to Leu560, Phe570 to Ile590, Ile616 to Ser636, and Met651 to Val671. An N-linked (GlcNAc...) asparagine glycan is attached at Asn685. 4 helical membrane passes run Met697–Leu717, Phe726–Cys746, Gly825–Ala845, and Ile870–Leu890.

Belongs to the chitin synthase family. Class I subfamily.

It localises to the cell membrane. The enzyme catalyses [(1-&gt;4)-N-acetyl-beta-D-glucosaminyl](n) + UDP-N-acetyl-alpha-D-glucosamine = [(1-&gt;4)-N-acetyl-beta-D-glucosaminyl](n+1) + UDP + H(+). Functionally, polymerizes chitin, a structural polymer of the cell wall and septum, by transferring the sugar moiety of UDP-GlcNAc to the non-reducing end of the growing chitin polymer. Shows additive effects in septum formation with CHS2, CHS3A, CHS4, CHS5, CHS6 and CHS7. Regulates mycelial growth and conidiation. Involved in virulence and mediates mycotoxin deoxinivalenol (DON) biosynthesis via the regulation of the expression of TRI4, TRI5 and TRI6. The sequence is that of Chitin synthase 1 from Gibberella zeae (strain ATCC MYA-4620 / CBS 123657 / FGSC 9075 / NRRL 31084 / PH-1) (Wheat head blight fungus).